Here is a 252-residue protein sequence, read N- to C-terminus: Triosephosphate isomerase (252 aa).

10–12 (NWK) is a substrate binding site. H96 acts as the Electrophile in catalysis. Catalysis depends on E168, which acts as the Proton acceptor. Substrate is bound by residues G174, S214, and 235 to 236 (GG).

The protein belongs to the triosephosphate isomerase family. Homodimer.

It localises to the cytoplasm. It catalyses the reaction D-glyceraldehyde 3-phosphate = dihydroxyacetone phosphate. Its pathway is carbohydrate biosynthesis; gluconeogenesis. The protein operates within carbohydrate degradation; glycolysis; D-glyceraldehyde 3-phosphate from glycerone phosphate: step 1/1. In terms of biological role, seems to be capable of enhancing bacteriocin synthesis. Its function is as follows. Involved in the gluconeogenesis. Catalyzes stereospecifically the conversion of dihydroxyacetone phosphate (DHAP) to D-glyceraldehyde-3-phosphate (G3P). The polypeptide is Triosephosphate isomerase (Lactobacillus delbrueckii subsp. lactis).